The following is a 288-amino-acid chain: MQIITNPREMQNIAENLRMKHQLIAVVMTMGALHEGHLSLIKLAKQQAGTVILTIFVNPAQFGENEDFHCYPRPFEKDSSMARAAEVDYLFAPDASMMYPEGFQTGIHNGPVAAILEGEHRPDHFNGVSTVVLKLMMICKAHIAVFGEKDAQQLAVIKRMTNDLNIDIRILEAPLLRDDDGVAISSRNIYLSSEERKQAAVLFRALSLADKRIQEGCTAAEKLIDEAISLIEQEPDAKIDYVSIVEAESFTQSALLEPGKEYRMVLAIWIGTTRLIDNRKYRVPLISA.

30–37 serves as a coordination point for ATP; it reads MGALHEGH. The active-site Proton donor is the His37. Residue Gln61 coordinates (R)-pantoate. Gln61 provides a ligand contact to beta-alanine. An ATP-binding site is contributed by 147 to 150; that stretch reads GEKD. Position 153 (Gln153) interacts with (R)-pantoate. ATP-binding positions include Leu176 and 184–187; that span reads ISSR.

It belongs to the pantothenate synthetase family. Homodimer.

It localises to the cytoplasm. The catalysed reaction is (R)-pantoate + beta-alanine + ATP = (R)-pantothenate + AMP + diphosphate + H(+). Its pathway is cofactor biosynthesis; (R)-pantothenate biosynthesis; (R)-pantothenate from (R)-pantoate and beta-alanine: step 1/1. Catalyzes the condensation of pantoate with beta-alanine in an ATP-dependent reaction via a pantoyl-adenylate intermediate. This Prosthecochloris aestuarii (strain DSM 271 / SK 413) protein is Pantothenate synthetase.